The following is a 103-amino-acid chain: Flagellar hook-basal body complex protein FliE (103 aa).

Belongs to the FliE family.

Its subcellular location is the bacterial flagellum basal body. In Cronobacter sakazakii (strain ATCC BAA-894) (Enterobacter sakazakii), this protein is Flagellar hook-basal body complex protein FliE.